Consider the following 568-residue polypeptide: Sulfite reductase [NADPH] hemoprotein beta-component (568 aa).

Residues Cys425, Cys431, Cys470, and Cys474 each coordinate [4Fe-4S] cluster. Siroheme is bound at residue Cys474.

Belongs to the nitrite and sulfite reductase 4Fe-4S domain family. In terms of assembly, alpha(8)-beta(8). The alpha component is a flavoprotein, the beta component is a hemoprotein. The cofactor is siroheme. Requires [4Fe-4S] cluster as cofactor.

It carries out the reaction hydrogen sulfide + 3 NADP(+) + 3 H2O = sulfite + 3 NADPH + 4 H(+). It functions in the pathway sulfur metabolism; hydrogen sulfide biosynthesis; hydrogen sulfide from sulfite (NADPH route): step 1/1. In terms of biological role, component of the sulfite reductase complex that catalyzes the 6-electron reduction of sulfite to sulfide. This is one of several activities required for the biosynthesis of L-cysteine from sulfate. The polypeptide is Sulfite reductase [NADPH] hemoprotein beta-component (Xanthomonas campestris pv. campestris (strain B100)).